Consider the following 544-residue polypeptide: Chaperonin GroEL (544 aa).

ATP contacts are provided by residues 30 to 33 (TLGP), Lys-51, 87 to 91 (DGTTT), Gly-415, and Asp-495.

Belongs to the chaperonin (HSP60) family. As to quaternary structure, forms a cylinder of 14 subunits composed of two heptameric rings stacked back-to-back. Interacts with the co-chaperonin GroES.

It is found in the cytoplasm. The catalysed reaction is ATP + H2O + a folded polypeptide = ADP + phosphate + an unfolded polypeptide.. Functionally, together with its co-chaperonin GroES, plays an essential role in assisting protein folding. The GroEL-GroES system forms a nano-cage that allows encapsulation of the non-native substrate proteins and provides a physical environment optimized to promote and accelerate protein folding. The chain is Chaperonin GroEL from Bartonella bacilliformis.